A 397-amino-acid polypeptide reads, in one-letter code: Acetate kinase (397 aa).

Asparagine 8 lines the Mg(2+) pocket. Lysine 15 lines the ATP pocket. Arginine 89 serves as a coordination point for substrate. The Proton donor/acceptor role is filled by aspartate 146. ATP is bound by residues 206–210 (HLGNG), 281–283 (DLR), and 329–333 (GVGEN). Glutamate 382 is a Mg(2+) binding site.

Belongs to the acetokinase family. Homodimer. Mg(2+) is required as a cofactor. Requires Mn(2+) as cofactor.

It localises to the cytoplasm. The enzyme catalyses acetate + ATP = acetyl phosphate + ADP. The protein operates within metabolic intermediate biosynthesis; acetyl-CoA biosynthesis; acetyl-CoA from acetate: step 1/2. In terms of biological role, catalyzes the formation of acetyl phosphate from acetate and ATP. Can also catalyze the reverse reaction. This chain is Acetate kinase, found in Bacillus thuringiensis subsp. konkukian (strain 97-27).